Here is a 239-residue protein sequence, read N- to C-terminus: Glucosamine-6-phosphate deaminase (239 aa).

D62 acts as the Proton acceptor; for enolization step in catalysis. Catalysis depends on N128, which acts as the For ring-opening step. H130 (proton acceptor; for ring-opening step) is an active-site residue. Catalysis depends on E135, which acts as the For ring-opening step.

This sequence belongs to the glucosamine/galactosamine-6-phosphate isomerase family. NagB subfamily.

The enzyme catalyses alpha-D-glucosamine 6-phosphate + H2O = beta-D-fructose 6-phosphate + NH4(+). The protein operates within amino-sugar metabolism; N-acetylneuraminate degradation; D-fructose 6-phosphate from N-acetylneuraminate: step 5/5. Catalyzes the reversible isomerization-deamination of glucosamine 6-phosphate (GlcN6P) to form fructose 6-phosphate (Fru6P) and ammonium ion. The sequence is that of Glucosamine-6-phosphate deaminase from Lactobacillus johnsonii (strain CNCM I-12250 / La1 / NCC 533).